A 169-amino-acid chain; its full sequence is uncharacterized protein (169 aa).

To M.tuberculosis Rv1480.

This is an uncharacterized protein from Mycobacterium avium.